Here is a 536-residue protein sequence, read N- to C-terminus: Glyco-Gag protein (536 aa).

The Cytoplasmic segment spans residues methionine 1–arginine 54. A helical membrane pass occupies residues leucine 55 to glutamate 75. Residues threonine 76–glutamate 536 are Extracellular-facing. An N-linked (GlcNAc...) asparagine; by host glycan is attached at asparagine 137. Disordered stretches follow at residues valine 174 to proline 284 and glutamate 494 to glutamate 536. Residues phenylalanine 177–proline 198 are compositionally biased toward pro residues. The span at proline 199 to lysine 209 shows a compositional bias: low complexity. 2 stretches are compositionally biased toward pro residues: residues threonine 210 to serine 223 and glutamate 233 to serine 246. Over residues glutamate 494 to aspartate 511 the composition is skewed to basic and acidic residues.

In terms of processing, glycosylated by host. Cleaved by host near the middle of the molecule, releasing the c-terminal half containing capsid and nucleoprotein domains op GAG.

It is found in the host cell membrane. Plays a role in viral particle release. Presumably acts by facilitating the fission of the virion bud at the cell surface. This Feline sarcoma virus (strain McDonough) protein is Glyco-Gag protein.